The chain runs to 211 residues: Uracil phosphoribosyltransferase (211 aa).

5-phospho-alpha-D-ribose 1-diphosphate-binding positions include R78, R103, and 130–138; that span reads DPMLATGNS. Uracil is bound by residues I193 and 198-200; that span reads GDA. Position 199 (D199) interacts with 5-phospho-alpha-D-ribose 1-diphosphate.

Belongs to the UPRTase family. Mg(2+) is required as a cofactor.

It catalyses the reaction UMP + diphosphate = 5-phospho-alpha-D-ribose 1-diphosphate + uracil. It functions in the pathway pyrimidine metabolism; UMP biosynthesis via salvage pathway; UMP from uracil: step 1/1. Its activity is regulated as follows. Allosterically activated by GTP. In terms of biological role, catalyzes the conversion of uracil and 5-phospho-alpha-D-ribose 1-diphosphate (PRPP) to UMP and diphosphate. The sequence is that of Uracil phosphoribosyltransferase from Acinetobacter baumannii (strain AB307-0294).